A 594-amino-acid polypeptide reads, in one-letter code: UvrABC system protein C (594 aa).

In terms of domain architecture, GIY-YIG spans N13–I99. In terms of domain architecture, UVR spans D205–I240.

It belongs to the UvrC family. As to quaternary structure, interacts with UvrB in an incision complex.

It is found in the cytoplasm. The UvrABC repair system catalyzes the recognition and processing of DNA lesions. UvrC both incises the 5' and 3' sides of the lesion. The N-terminal half is responsible for the 3' incision and the C-terminal half is responsible for the 5' incision. The sequence is that of UvrABC system protein C from Helicobacter acinonychis (strain Sheeba).